The following is a 227-amino-acid chain: 2,3-bisphosphoglycerate-dependent phosphoglycerate mutase (227 aa).

Substrate contacts are provided by residues 8 to 15 (RHGQSIWN), 21 to 22 (TG), Arg58, 110 to 113 (ERYY), Lys121, 137 to 138 (RR), and 181 to 182 (GN). His9 serves as the catalytic Tele-phosphohistidine intermediate. The active-site Proton donor/acceptor is the Glu110.

Belongs to the phosphoglycerate mutase family. BPG-dependent PGAM subfamily. Homodimer.

The catalysed reaction is (2R)-2-phosphoglycerate = (2R)-3-phosphoglycerate. It functions in the pathway carbohydrate degradation; glycolysis; pyruvate from D-glyceraldehyde 3-phosphate: step 3/5. Catalyzes the interconversion of 2-phosphoglycerate and 3-phosphoglycerate. In Pseudoalteromonas atlantica (strain T6c / ATCC BAA-1087), this protein is 2,3-bisphosphoglycerate-dependent phosphoglycerate mutase.